The sequence spans 107 residues: UPF0145 protein BH1111 (107 aa).

The protein belongs to the UPF0145 family.

This is UPF0145 protein BH1111 from Halalkalibacterium halodurans (strain ATCC BAA-125 / DSM 18197 / FERM 7344 / JCM 9153 / C-125) (Bacillus halodurans).